Here is a 337-residue protein sequence, read N- to C-terminus: Quinolinate synthase (337 aa).

Iminosuccinate-binding residues include H38 and S59. Residue C104 coordinates [4Fe-4S] cluster. Iminosuccinate is bound by residues Y130 to N132 and S147. Position 191 (C191) interacts with [4Fe-4S] cluster. Residues H217–E219 and T234 each bind iminosuccinate. C288 serves as a coordination point for [4Fe-4S] cluster.

This sequence belongs to the quinolinate synthase family. Type 1 subfamily. It depends on [4Fe-4S] cluster as a cofactor.

It localises to the cytoplasm. It catalyses the reaction iminosuccinate + dihydroxyacetone phosphate = quinolinate + phosphate + 2 H2O + H(+). It functions in the pathway cofactor biosynthesis; NAD(+) biosynthesis; quinolinate from iminoaspartate: step 1/1. Catalyzes the condensation of iminoaspartate with dihydroxyacetone phosphate to form quinolinate. This chain is Quinolinate synthase, found in Wigglesworthia glossinidia brevipalpis.